Reading from the N-terminus, the 799-residue chain is MDPGVEKKKQQMELVDVESGGLPVERQDSLFREAVRAEHAGAAHWDEQDSWGRTMSLAFQCVGILYGDIGTSSLYVYSSTFEHGIGHPDDVVGVLSLIVYSFMLFTVIKIVFVALHANDHGDGGTFALYSLISRHAKVSLIPNHQAEDELISGYSSSGKPSATLRRAHWLKQLLEASKAAKISLFLLTILAIAMVISDAVLTPPISVLSAVGGLREKVPHLTTDQIVWITVAILVVLFAIQRYGTDKVGYSFAPIILLWLLLIGATGLYNLIKHDISVLRAFNPKYIIDYFRRNKKEGWVSLGSILLCFTGSEALFANLGYFSIRSIQLSFSFALLPSVLLTYIGQAAFLSKNPKNVANTFFAATPISLFWPTFIMAIAASIIGSQAMISCAFATVSHLQSLSCFPRVKILHTSKRFPGQLYIPGVNFLLCVAACVVTVSFKTTVIIGKAHEICVILVMIITTLLMTIVMLLVWKINILWVALFFITFTSTEAVYLSSVLYKFTHGPYVPVAMSVVLMVVMIVWHYVHVKRYKYELEHTVSTDKVKEMLESHDLKRVRGVALFYTELVQGIPPIFPHLIEKIPTIHSVLVFISIKHLPVPHVDTSERFLFRQVELKDYKVFRCVARYGYRDSLEEAKDFVVTLLENLQDYIRDVNLYTDEPHTISAHSSCNHSFSREKPSGRYAVHAEDMLTPIESFSEITALSNYGSDRLPHFKASKMNMEELAKIEQEQMFIEKEMEKGVVYILGETEVVVRPHSSLLKKIVVNYVYSFLRKNFVQGQKMLFIPHRQLLKVGISYEI.

The Cytoplasmic portion of the chain corresponds to 1-56 (MDPGVEKKKQQMELVDVESGGLPVERQDSLFREAVRAEHAGAAHWDEQDSWGRTMS). Residues 57–77 (LAFQCVGILYGDIGTSSLYVY) traverse the membrane as a helical segment. Residues 78-93 (SSTFEHGIGHPDDVVG) are Extracellular-facing. Residues 94-114 (VLSLIVYSFMLFTVIKIVFVA) traverse the membrane as a helical segment. Topologically, residues 115-181 (LHANDHGDGG…QLLEASKAAK (67 aa)) are cytoplasmic. A helical membrane pass occupies residues 182-202 (ISLFLLTILAIAMVISDAVLT). Residues 203 to 219 (PPISVLSAVGGLREKVP) lie on the Extracellular side of the membrane. Residues 220-240 (HLTTDQIVWITVAILVVLFAI) form a helical membrane-spanning segment. Residues 241–251 (QRYGTDKVGYS) lie on the Cytoplasmic side of the membrane. Residues 252–272 (FAPIILLWLLLIGATGLYNLI) traverse the membrane as a helical segment. At 273-301 (KHDISVLRAFNPKYIIDYFRRNKKEGWVS) the chain is on the extracellular side. Residues 302–322 (LGSILLCFTGSEALFANLGYF) traverse the membrane as a helical segment. Over 323–328 (SIRSIQ) the chain is Cytoplasmic. Residues 329–349 (LSFSFALLPSVLLTYIGQAAF) traverse the membrane as a helical segment. Over 350-362 (LSKNPKNVANTFF) the chain is Extracellular. The chain crosses the membrane as a helical span at residues 363–383 (AATPISLFWPTFIMAIAASII). Topologically, residues 384-420 (GSQAMISCAFATVSHLQSLSCFPRVKILHTSKRFPGQ) are cytoplasmic. Residues 421 to 441 (LYIPGVNFLLCVAACVVTVSF) traverse the membrane as a helical segment. The Extracellular portion of the chain corresponds to 442-452 (KTTVIIGKAHE). A helical membrane pass occupies residues 453–473 (ICVILVMIITTLLMTIVMLLV). Topologically, residues 474–475 (WK) are cytoplasmic. A helical membrane pass occupies residues 476-496 (INILWVALFFITFTSTEAVYL). The Extracellular segment spans residues 497–508 (SSVLYKFTHGPY). A helical membrane pass occupies residues 509-529 (VPVAMSVVLMVVMIVWHYVHV). The Cytoplasmic segment spans residues 530-799 (KRYKYELEHT…LLKVGISYEI (270 aa)).

Belongs to the HAK/KUP transporter (TC 2.A.72.3) family.

It localises to the membrane. Its function is as follows. High-affinity potassium transporter. In Oryza sativa subsp. japonica (Rice), this protein is Potassium transporter 21 (HAK21).